A 464-amino-acid polypeptide reads, in one-letter code: Trigger factor (464 aa).

The region spanning 166–245 (GDFLTIDITA…VKAVKERELP (80 aa)) is the PPIase FKBP-type domain. The interval 426 to 464 (FVRPGGEEEAPAAEVTEADTAEGEATEVPAEDEKAEAKA) is disordered. Acidic residues predominate over residues 432 to 455 (EEEAPAAEVTEADTAEGEATEVPA).

Belongs to the FKBP-type PPIase family. Tig subfamily.

The protein resides in the cytoplasm. It catalyses the reaction [protein]-peptidylproline (omega=180) = [protein]-peptidylproline (omega=0). Involved in protein export. Acts as a chaperone by maintaining the newly synthesized protein in an open conformation. Functions as a peptidyl-prolyl cis-trans isomerase. This Pseudarthrobacter chlorophenolicus (strain ATCC 700700 / DSM 12829 / CIP 107037 / JCM 12360 / KCTC 9906 / NCIMB 13794 / A6) (Arthrobacter chlorophenolicus) protein is Trigger factor.